A 196-amino-acid chain; its full sequence is Protein GrpE (196 aa).

The disordered stretch occupies residues 1-41 (MSSKEQKTPEGQAPEEIITEQHDDVEAVEPEVSAEQVDPRD).

This sequence belongs to the GrpE family. In terms of assembly, homodimer.

The protein localises to the cytoplasm. Participates actively in the response to hyperosmotic and heat shock by preventing the aggregation of stress-denatured proteins, in association with DnaK and GrpE. It is the nucleotide exchange factor for DnaK and may function as a thermosensor. Unfolded proteins bind initially to DnaJ; upon interaction with the DnaJ-bound protein, DnaK hydrolyzes its bound ATP, resulting in the formation of a stable complex. GrpE releases ADP from DnaK; ATP binding to DnaK triggers the release of the substrate protein, thus completing the reaction cycle. Several rounds of ATP-dependent interactions between DnaJ, DnaK and GrpE are required for fully efficient folding. This chain is Protein GrpE, found in Klebsiella pneumoniae subsp. pneumoniae (strain ATCC 700721 / MGH 78578).